The primary structure comprises 267 residues: Diphthine--ammonia ligase (267 aa).

Y97 is subject to Phosphotyrosine.

This sequence belongs to the Diphthine--ammonia ligase family.

It catalyses the reaction diphthine-[translation elongation factor 2] + NH4(+) + ATP = diphthamide-[translation elongation factor 2] + AMP + diphosphate + H(+). The protein operates within protein modification; peptidyl-diphthamide biosynthesis. Amidase that catalyzes the last step of diphthamide biosynthesis using ammonium and ATP. Diphthamide biosynthesis consists in the conversion of an L-histidine residue in the translation elongation factor 2 (EEF2) to diphthamide. In Mus musculus (Mouse), this protein is Diphthine--ammonia ligase (Dph6).